The following is a 347-amino-acid chain: P2Y purinoceptor 12 (347 aa).

Topologically, residues Met-1–Leu-33 are extracellular. Asn-7 and Asn-12 each carry an N-linked (GlcNAc...) asparagine glycan. Cystine bridges form between Cys-23-Cys-276 and Cys-103-Cys-181. The chain crosses the membrane as a helical span at residues Phe-34 to Phe-56. The Cytoplasmic portion of the chain corresponds to Phe-57–Ile-67. Phosphoserine is present on residues Ser-61 and Ser-63. Residues Phe-68–Leu-88 form a helical membrane-spanning segment. The Extracellular portion of the chain corresponds to Ser-89–Cys-103. ADP is bound by residues Arg-99, Cys-103, and Tyr-111. The helical transmembrane segment at Gln-104–Ile-124 threads the bilayer. Topologically, residues Thr-125–Lys-148 are cytoplasmic. The helical transmembrane segment at Ile-149–Leu-168 threads the bilayer. ADP-binding positions include Ser-162 to Asn-165, Cys-181 to Lys-185, His-193, and Asn-197. Residues Thr-169 to Val-191 are Extracellular-facing. The chain crosses the membrane as a helical span at residues Trp-192–Val-213. Residues Cys-214 to Lys-239 lie on the Cytoplasmic side of the membrane. A helical transmembrane segment spans residues Val-240–Tyr-265. Residues Arg-262–Tyr-265, Gln-269, and Lys-286 each bind ADP. The Extracellular segment spans residues Thr-266 to Tyr-284. A helical transmembrane segment spans residues Val-285–Tyr-304. Over Phe-305 to Met-347 the chain is Cytoplasmic. Residues Cys-321–Met-347 form a disordered region.

It belongs to the G-protein coupled receptor 1 family.

The protein resides in the cell membrane. Receptor for ADP and ATP coupled to G-proteins that inhibit the adenylyl cyclase second messenger system. Required for normal platelet aggregation and blood coagulation. In Mus musculus (Mouse), this protein is P2Y purinoceptor 12 (P2ry12).